The chain runs to 86 residues: Co-chaperonin GroES (86 aa).

The protein belongs to the GroES chaperonin family. As to quaternary structure, heptamer of 7 subunits arranged in a ring. Interacts with the chaperonin GroEL.

The protein localises to the cytoplasm. In terms of biological role, together with the chaperonin GroEL, plays an essential role in assisting protein folding. The GroEL-GroES system forms a nano-cage that allows encapsulation of the non-native substrate proteins and provides a physical environment optimized to promote and accelerate protein folding. GroES binds to the apical surface of the GroEL ring, thereby capping the opening of the GroEL channel. The polypeptide is Co-chaperonin GroES (Sulfurovum sp. (strain NBC37-1)).